We begin with the raw amino-acid sequence, 489 residues long: Betaine aldehyde dehydrogenase (489 aa).

K(+)-binding residues include T26 and D93. 150–152 (GAW) contributes to the NAD(+) binding site. Catalysis depends on K162, which acts as the Charge relay system. 176-179 (KPSE) provides a ligand contact to NAD(+). V180 is a binding site for K(+). 229 to 232 (GVET) is a binding site for NAD(+). Position 245 (L245) interacts with K(+). Catalysis depends on E251, which acts as the Proton acceptor. 3 residues coordinate NAD(+): G253, C285, and E386. C285 acts as the Nucleophile in catalysis. Residue C285 is modified to Cysteine sulfenic acid (-SOH). The K(+) site is built by K456 and G459. E463 acts as the Charge relay system in catalysis.

This sequence belongs to the aldehyde dehydrogenase family. As to quaternary structure, dimer of dimers. It depends on K(+) as a cofactor.

It catalyses the reaction betaine aldehyde + NAD(+) + H2O = glycine betaine + NADH + 2 H(+). The protein operates within amine and polyamine biosynthesis; betaine biosynthesis via choline pathway; betaine from betaine aldehyde: step 1/1. Functionally, involved in the biosynthesis of the osmoprotectant glycine betaine. Catalyzes the irreversible oxidation of betaine aldehyde to the corresponding acid. This Burkholderia pseudomallei (strain 668) protein is Betaine aldehyde dehydrogenase.